The following is a 261-amino-acid chain: Putative carbamate hydrolase RutD (261 aa).

Residues 14-119 enclose the AB hydrolase-1 domain; it reads PTILLSSGLG…LINAWSKADP (106 aa).

This sequence belongs to the AB hydrolase superfamily. Hydrolase RutD family.

The catalysed reaction is carbamate + 2 H(+) = NH4(+) + CO2. In terms of biological role, involved in pyrimidine catabolism. May facilitate the hydrolysis of carbamate, a reaction that can also occur spontaneously. The polypeptide is Putative carbamate hydrolase RutD (Agrobacterium fabrum (strain C58 / ATCC 33970) (Agrobacterium tumefaciens (strain C58))).